The primary structure comprises 190 residues: Voltage-dependent calcium channel gamma-like subunit (190 aa).

4 consecutive transmembrane segments (helical) span residues 25–45 (FIRT…SVSI), 96–116 (ALAV…QLCE), 131–151 (LLVS…LLRN), and 155–175 (LIGF…LFLN).

It belongs to the PMP-22/EMP/MP20 family. CACNG subfamily. In terms of assembly, the L-type calcium channel is composed of five subunits: alpha-1, alpha-2/delta, beta and gamma.

It is found in the membrane. Functionally, thought to stabilize the calcium channel in an inactivated (closed) state. Modulates calcium current when coexpressed with CACNA1G. The sequence is that of Voltage-dependent calcium channel gamma-like subunit from Homo sapiens (Human).